The chain runs to 451 residues: MSETENKTTTETPTTTDSTVTTKEVKVPKATSKGNDDYFFVKNVKNQLSNTRTRATVDRLAPTPPLSQAAKRKLIDTKERKEKKEKKEKEPKEPKEPKEKAKKKAKTEKKKDDGDEEEDEEKEEDEEQKEEQSQEEDSEESEEEQNSDEDKKKKKKQAKKVAKKETEPKKKEAKPKKEAKPKKETTKKEKEATTTSSDSTEKKEKEEKPKKEKKISKKDQAAAEKKKDGDDSTTTTATATTTTDDSTENKEEKKDKKTTKKPAAAEKKKVKKDGDDDETAAAATEEKKDEEKSEEKEKKETKKPAAPKKPAAAEKKKTAANPTDKKDGENKDVTPSDDKPAATTTTTTAAAATTTEEPKEKITKPAADKKKAPANKKAEKDQSSSDESANKETTTATTTTTNKDATAPTTTTNKDATAPTTTTTKDNVDEASVKKTANSAPKKEAAKNKSK.

The disordered stretch occupies residues 1–451 (MSETENKTTT…KKEAAKNKSK (451 aa)). The segment covering 9-22 (TTETPTTTDSTVTT) has biased composition (low complexity). Residues 44–54 (VKNQLSNTRTR) show a composition bias toward polar residues. A compositionally biased stretch (basic and acidic residues) spans 73–99 (KLIDTKERKEKKEKKEKEPKEPKEPKE). Acidic residues predominate over residues 114 to 147 (GDEEEDEEKEEDEEQKEEQSQEEDSEESEEEQNS). Basic residues predominate over residues 152-162 (KKKKKQAKKVA). Composition is skewed to basic and acidic residues over residues 163-192 (KKET…EKEA), 199-210 (STEKKEKEEKPK), and 217-230 (KKDQ…KDGD). Positions 232 to 244 (STTTTATATTTTD) are enriched in low complexity. Composition is skewed to basic and acidic residues over residues 284–303 (TEEK…ETKK) and 311–340 (AAAE…DDKP). The segment covering 341–355 (AATTTTTTAAAATTT) has biased composition (low complexity). Basic and acidic residues predominate over residues 356–383 (EEPKEKITKPAADKKKAPANKKAEKDQS). Residues 393–425 (TTTATTTTTNKDATAPTTTTNKDATAPTTTTTK) are compositionally biased toward low complexity. Over residues 441–451 (PKKEAAKNKSK) the composition is skewed to basic and acidic residues.

This is an uncharacterized protein from Dictyostelium discoideum (Social amoeba).